The following is a 242-amino-acid chain: uncharacterized protein (242 aa).

It belongs to the MtxX family.

This is an uncharacterized protein from Methanothermobacter thermautotrophicus (strain ATCC 29096 / DSM 1053 / JCM 10044 / NBRC 100330 / Delta H) (Methanobacterium thermoautotrophicum).